A 408-amino-acid chain; its full sequence is Imidazolonepropionase (408 aa).

The Fe(3+) site is built by His73 and His75. His73 and His75 together coordinate Zn(2+). 4-imidazolone-5-propanoate contacts are provided by Arg82, Tyr145, and His178. Tyr145 contacts N-formimidoyl-L-glutamate. A Fe(3+)-binding site is contributed by His243. His243 provides a ligand contact to Zn(2+). A 4-imidazolone-5-propanoate-binding site is contributed by Gln246. Residue Asp318 participates in Fe(3+) binding. Asp318 serves as a coordination point for Zn(2+). Positions 320 and 322 each coordinate N-formimidoyl-L-glutamate. Position 323 (Ser323) interacts with 4-imidazolone-5-propanoate.

Belongs to the metallo-dependent hydrolases superfamily. HutI family. It depends on Zn(2+) as a cofactor. The cofactor is Fe(3+).

It localises to the cytoplasm. It catalyses the reaction 4-imidazolone-5-propanoate + H2O = N-formimidoyl-L-glutamate. Its pathway is amino-acid degradation; L-histidine degradation into L-glutamate; N-formimidoyl-L-glutamate from L-histidine: step 3/3. Functionally, catalyzes the hydrolytic cleavage of the carbon-nitrogen bond in imidazolone-5-propanoate to yield N-formimidoyl-L-glutamate. It is the third step in the universal histidine degradation pathway. In Shewanella sp. (strain W3-18-1), this protein is Imidazolonepropionase.